A 305-amino-acid polypeptide reads, in one-letter code: tRNA dimethylallyltransferase (305 aa).

8–15 provides a ligand contact to ATP; the sequence is GPTGTGKS. 10–15 provides a ligand contact to substrate; sequence TGTGKS.

It belongs to the IPP transferase family. Monomer. The cofactor is Mg(2+).

The catalysed reaction is adenosine(37) in tRNA + dimethylallyl diphosphate = N(6)-dimethylallyladenosine(37) in tRNA + diphosphate. Functionally, catalyzes the transfer of a dimethylallyl group onto the adenine at position 37 in tRNAs that read codons beginning with uridine, leading to the formation of N6-(dimethylallyl)adenosine (i(6)A). This chain is tRNA dimethylallyltransferase, found in Mycobacterium sp. (strain JLS).